The primary structure comprises 610 residues: UvrABC system protein C (610 aa).

The 79-residue stretch at 16–94 (SQPGVYRMYD…IKLYQPRYNV (79 aa)) folds into the GIY-YIG domain. In terms of domain architecture, UVR spans 204 to 239 (QQVLNQLISRMESASRDLRFEDAARIRDQIQAVRRV).

It belongs to the UvrC family. Interacts with UvrB in an incision complex.

The protein localises to the cytoplasm. In terms of biological role, the UvrABC repair system catalyzes the recognition and processing of DNA lesions. UvrC both incises the 5' and 3' sides of the lesion. The N-terminal half is responsible for the 3' incision and the C-terminal half is responsible for the 5' incision. The chain is UvrABC system protein C from Pectobacterium atrosepticum (strain SCRI 1043 / ATCC BAA-672) (Erwinia carotovora subsp. atroseptica).